The chain runs to 200 residues: ATP-dependent Clp protease proteolytic subunit (200 aa).

The active-site Nucleophile is serine 103. Residue histidine 128 is part of the active site.

This sequence belongs to the peptidase S14 family. In terms of assembly, fourteen ClpP subunits assemble into 2 heptameric rings which stack back to back to give a disk-like structure with a central cavity, resembling the structure of eukaryotic proteasomes.

Its subcellular location is the cytoplasm. It catalyses the reaction Hydrolysis of proteins to small peptides in the presence of ATP and magnesium. alpha-casein is the usual test substrate. In the absence of ATP, only oligopeptides shorter than five residues are hydrolyzed (such as succinyl-Leu-Tyr-|-NHMec, and Leu-Tyr-Leu-|-Tyr-Trp, in which cleavage of the -Tyr-|-Leu- and -Tyr-|-Trp bonds also occurs).. Its function is as follows. Cleaves peptides in various proteins in a process that requires ATP hydrolysis. Has a chymotrypsin-like activity. Plays a major role in the degradation of misfolded proteins. The protein is ATP-dependent Clp protease proteolytic subunit of Vibrio vulnificus (strain CMCP6).